Reading from the N-terminus, the 144-residue chain is 3-hydroxyacyl-[acyl-carrier-protein] dehydratase FabZ (144 aa).

H48 is a catalytic residue.

Belongs to the thioester dehydratase family. FabZ subfamily.

It localises to the cytoplasm. It catalyses the reaction a (3R)-hydroxyacyl-[ACP] = a (2E)-enoyl-[ACP] + H2O. Involved in unsaturated fatty acids biosynthesis. Catalyzes the dehydration of short chain beta-hydroxyacyl-ACPs and long chain saturated and unsaturated beta-hydroxyacyl-ACPs. The polypeptide is 3-hydroxyacyl-[acyl-carrier-protein] dehydratase FabZ (Bacillus cereus (strain AH187)).